A 245-amino-acid chain; its full sequence is MEGWQRAFVLHGRPYSETSLLLDLFSESDGRVRVLAKGARARRSSLKGCLQPFTPLLVRWSGRGEVKTLRSAEPVSLALPLTGSMLYSGLYVNELLARVLEHETNYSALFFDYLHCLQHLAAQDASPEPALRRFELALLGYLGYGVDFLHCAGSGEPVADTMTYQYREERGFTASLVVDNKSFTGHELHSLASREFPDVGTLKAAKRFTRIALKPYLGGKPLKSRELFRQFVPAANLSKPTSSDK.

Belongs to the RecO family.

Involved in DNA repair and RecF pathway recombination. This chain is DNA repair protein RecO, found in Pectobacterium atrosepticum (strain SCRI 1043 / ATCC BAA-672) (Erwinia carotovora subsp. atroseptica).